Here is a 423-residue protein sequence, read N- to C-terminus: Mannose-6-phosphate isomerase (423 aa).

Residue A2 is modified to N-acetylalanine. Phosphoserine is present on residues S102 and S108. Zn(2+)-binding residues include Q110, H112, E137, and H276. Residue R295 is part of the active site.

The protein belongs to the mannose-6-phosphate isomerase type 1 family. The cofactor is Zn(2+).

It localises to the cytoplasm. The enzyme catalyses D-mannose 6-phosphate = D-fructose 6-phosphate. The protein operates within nucleotide-sugar biosynthesis; GDP-alpha-D-mannose biosynthesis; alpha-D-mannose 1-phosphate from D-fructose 6-phosphate: step 1/2. Its function is as follows. Isomerase that catalyzes the interconversion of fructose-6-P and mannose-6-P and has a critical role in the supply of D-mannose derivatives required for many eukaryotic glycosylation reactions. The sequence is that of Mannose-6-phosphate isomerase (MPI) from Pan troglodytes (Chimpanzee).